The primary structure comprises 221 residues: MAPYHIRQYQDSDHKSVVDVFTKGMEEHIPSTFRHMLMLPRTLLLLLGVPLALVLVSGSWLLAVVCIFFLLLLLRFLAGQPWKEYVATCLRTDMADITKSYLNAHGSFWVAESGNQVVGIVAALPVKDPPSGRKQLQLFRLSVSSQHRGQGIAKALVRTVLQFARDQGYTDVVLETSTLQQGAMTLYLGMGFQKTGQRFLTMFWRLVGIRTIQLKYPFPSA.

The chain crosses the membrane as a helical span at residues 53–73 (LVLVSGSWLLAVVCIFFLLLL). In terms of domain architecture, N-acetyltransferase spans 69–219 (FLLLLLRFLA…RTIQLKYPFP (151 aa)).

This sequence belongs to the camello family.

The protein localises to the membrane. May play a role in regulation of gastrulation. This Rattus norvegicus (Rat) protein is N-acetyltransferase 8F1.